Reading from the N-terminus, the 419-residue chain is Serine hydroxymethyltransferase (419 aa).

(6S)-5,6,7,8-tetrahydrofolate contacts are provided by residues Leu121 and Gly125–Leu127. Lys229 carries the N6-(pyridoxal phosphate)lysine modification. A (6S)-5,6,7,8-tetrahydrofolate-binding site is contributed by Ser354–Phe356.

It belongs to the SHMT family. In terms of assembly, homodimer. Pyridoxal 5'-phosphate is required as a cofactor.

The protein localises to the cytoplasm. The catalysed reaction is (6R)-5,10-methylene-5,6,7,8-tetrahydrofolate + glycine + H2O = (6S)-5,6,7,8-tetrahydrofolate + L-serine. It participates in one-carbon metabolism; tetrahydrofolate interconversion. It functions in the pathway amino-acid biosynthesis; glycine biosynthesis; glycine from L-serine: step 1/1. Functionally, catalyzes the reversible interconversion of serine and glycine with tetrahydrofolate (THF) serving as the one-carbon carrier. This reaction serves as the major source of one-carbon groups required for the biosynthesis of purines, thymidylate, methionine, and other important biomolecules. Also exhibits THF-independent aldolase activity toward beta-hydroxyamino acids, producing glycine and aldehydes, via a retro-aldol mechanism. The protein is Serine hydroxymethyltransferase of Coxiella burnetii (strain RSA 493 / Nine Mile phase I).